Here is a 454-residue protein sequence, read N- to C-terminus: Putative flavin-containing monoamine oxidase AofH (454 aa).

The protein belongs to the flavin monoamine oxidase family. The cofactor is FAD.

This Mycobacterium tuberculosis (strain CDC 1551 / Oshkosh) protein is Putative flavin-containing monoamine oxidase AofH (aofH).